The sequence spans 178 residues: Gamma-crystallin S (178 aa).

Position 2 is an N-acetylserine (serine 2). Positions serine 2–glycine 5 are N-terminal arm. Beta/gamma crystallin 'Greek key' domains are found at residues threonine 6–glycine 44 and glycine 45–histidine 87. The connecting peptide stretch occupies residues leucine 88–glutamine 93. 2 consecutive Beta/gamma crystallin 'Greek key' domains span residues tyrosine 94–glutamate 134 and glycine 135–valine 177.

It belongs to the beta/gamma-crystallin family. In terms of assembly, monomer.

Its function is as follows. Crystallins are the dominant structural components of the vertebrate eye lens. The sequence is that of Gamma-crystallin S (CRYGS) from Bos taurus (Bovine).